Consider the following 260-residue polypeptide: Small ribosomal subunit protein eS4 (260 aa).

Positions 46–111 constitute an S4 RNA-binding domain; the sequence is VPLLILVRDM…RYRVVMNEHH (66 aa).

It belongs to the eukaryotic ribosomal protein eS4 family.

This chain is Small ribosomal subunit protein eS4, found in Methanopyrus kandleri (strain AV19 / DSM 6324 / JCM 9639 / NBRC 100938).